Reading from the N-terminus, the 192-residue chain is Ras-like GTP-binding protein O-RHO (192 aa).

Residue 12-19 (GDGACGKT) coordinates GTP. Positions 34–42 (YVPTVFENY) match the Effector region motif. GTP-binding positions include 59-63 (DTAGQ) and 117-120 (NKKT). C189 bears the Cysteine methyl ester mark. The S-geranylgeranyl cysteine moiety is linked to residue C189. Positions 190–192 (LLL) are cleaved as a propeptide — removed in mature form.

It belongs to the small GTPase superfamily. Rho family.

It localises to the cell membrane. In Diplobatis ommata (Ocellated electric ray), this protein is Ras-like GTP-binding protein O-RHO.